The sequence spans 435 residues: Exodeoxyribonuclease 7 large subunit (435 aa).

Over residues 1-10 (MRGTRVTETA) the composition is skewed to polar residues. Disordered regions lie at residues 1 to 21 (MRGT…GPPT) and 413 to 435 (AGKA…PRGK).

This sequence belongs to the XseA family. In terms of assembly, heterooligomer composed of large and small subunits.

The protein localises to the cytoplasm. It catalyses the reaction Exonucleolytic cleavage in either 5'- to 3'- or 3'- to 5'-direction to yield nucleoside 5'-phosphates.. Bidirectionally degrades single-stranded DNA into large acid-insoluble oligonucleotides, which are then degraded further into small acid-soluble oligonucleotides. This Leifsonia xyli subsp. xyli (strain CTCB07) protein is Exodeoxyribonuclease 7 large subunit.